The chain runs to 522 residues: Cyclic GMP-AMP synthase (522 aa).

The tract at residues 1–144 is disordered; that stretch reads MQPWHGKAMQ…PPGPWDVPSP (144 aa). 2 DNA-binding regions span residues 1–160 and 173–215; these read MQPW…DAAP and KLSR…GSYY. Lys-7 is subject to N6-acetyllysine. Ser-13 is modified (phosphoserine). Lys-21 carries the N6-acetyllysine modification. Ser-37 is modified (phosphoserine). 5 positions are modified to N6-acetyllysine: Lys-47, Lys-50, Lys-56, Lys-62, and Lys-63. Phosphoserine is present on Ser-64. The span at 64–73 shows a compositional bias: basic and acidic residues; sequence SAPDTQERPP. Residues 64 to 75 form a required for association with the cell membrane region; that stretch reads SAPDTQERPPVR. Position 68 is a phosphothreonine (Thr-68). N6-acetyllysine is present on residues Lys-82 and Lys-83. Polar residues predominate over residues 88 to 97; it reads AQDTQPSDAT. Thr-91 is modified (phosphothreonine). Phosphoserine is present on residues Ser-98, Ser-116, and Ser-129. The segment covering 98–118 has biased composition (low complexity); that stretch reads SAPGAEGLEPPAAREPALSRA. The required for activation upon DNA viral infection stretch occupies residues 120–160; sequence SCRQRGARCSTKPRPPPGPWDVPSPGLPVSAPILVRRDAAP. Lys-131 carries the N6-lactoyllysine modification. Pro residues predominate over residues 132–144; the sequence is PRPPPGPWDVPSP. Position 143 is a phosphoserine (Ser-143). Residues 169 to 174 carry the Nuclear export signal motif; it reads LEKLKL. Lys-173 participates in a covalent cross-link: Glycyl lysine isopeptide (Lys-Gly) (interchain with G-Cter in ubiquitin). A PolyADP-ribosyl aspartic acid modification is found at Asp-191. Residue Asn-210 is modified to (Microbial infection) Deamidated asparagine; by herpes simplex virus 1/HHV-1 UL37. Thr-211 provides a ligand contact to GTP. Ser-213 carries the phosphoserine modification. Ser-213 lines the ATP pocket. The residue at position 215 (Tyr-215) is a Phosphotyrosine; by BLK. Glu-225 and Asp-227 together coordinate Mg(2+). 225–227 is a binding site for ATP; that stretch reads EFD. A 2',3'-cGAMP-binding site is contributed by Asp-227. Residue Lys-231 forms a Glycyl lysine isopeptide (Lys-Gly) (interchain with G-Cter in SUMO) linkage. Lys-285 participates in a covalent cross-link: Glycyl lysine isopeptide (Lys-Gly) (interchain with G-Cter in ubiquitin). Glu-286 is subject to 5-glutamyl polyglutamate. The Nuclear localization signal signature appears at 295 to 305; the sequence is DVIMKRKRGGS. Positions 299-302 match the KRKR-loop motif; that stretch reads KRKR. Ser-305 carries the phosphoserine; by CDK1 and PKB modification. Glu-314 bears the 5-glutamyl glutamate mark. Residue Asp-319 participates in GTP binding. Asp-319 contributes to the Mg(2+) binding site. Asp-319 contributes to the 2',3'-cGAMP binding site. An interaction with collided ribosomes region spans residues 341–382; the sequence is QNWLSAKVRKQLRLKPFYLVPKHAKEGNGFQEETWRLSFSHI. A Glycyl lysine isopeptide (Lys-Gly) (interchain with G-Cter in SUMO); alternate cross-link involves residue Lys-347. A Glycyl lysine isopeptide (Lys-Gly) (interchain with G-Cter in ubiquitin); alternate cross-link involves residue Lys-347. 2',3'-cGAMP-binding residues include Lys-362 and Arg-376. Residue 376–383 coordinates GTP; it reads RLSFSHIE. 380–383 contacts ATP; sequence SHIE. Lys-384 carries the N6-acetyllysine modification. A Glycyl lysine isopeptide (Lys-Gly) (interchain with G-Cter in SUMO); alternate cross-link involves residue Lys-384. Lys-384 is covalently cross-linked (Glycyl lysine isopeptide (Lys-Gly) (interchain with G-Cter in ubiquitin); alternate). The interval 384–407 is DNA-binding; sequence KEILNNHGKSKTCCENKEEKCCRK. At Asn-389 the chain carries (Microbial infection) Deamidated asparagine; by herpes simplex virus 1/HHV-1 UL37. A Zn(2+)-binding site is contributed by His-390. Lys-392 and Lys-394 each carry N6-acetyllysine. Lys-394 is covalently cross-linked (Glycyl lysine isopeptide (Lys-Gly) (interchain with G-Cter in SUMO)). The Zn(2+) site is built by Cys-396, Cys-397, and Cys-404. 2 S-palmitoyl cysteine lipidation sites follow: Cys-404 and Cys-405. Residues Lys-411, Lys-414, Lys-427, and Lys-428 each participate in a glycyl lysine isopeptide (Lys-Gly) (interchain with G-Cter in ubiquitin) cross-link. Lys-414 carries the N6-acetyllysine modification. Lys-414 is a binding site for ATP. The short motif at 427–429 is the KKH-loop element; it reads KKH. Phosphoserine is present on residues Ser-434 and Ser-435. 435–439 is an ATP binding site; it reads SYHVK. A (Microbial infection) Deamidated glutamine; by herpes simplex virus 1/HHV-1 UL37 mark is found at Gln-451 and Gln-454. Residue Cys-474 is the site of S-palmitoyl cysteine attachment. Residue Lys-479 forms a Glycyl lysine isopeptide (Lys-Gly) (interchain with G-Cter in SUMO); alternate linkage. A Glycyl lysine isopeptide (Lys-Gly) (interchain with G-Cter in ubiquitin); alternate cross-link involves residue Lys-479. Position 506 is an N6-methyllysine (Lys-506).

The protein belongs to the mab-21 family. In terms of assembly, monomer in the absence of DNA. Homodimer in presence of dsDNA: forms a 2:2 dimer with two enzymes binding to two DNA molecules. Interacts with nucleosomes; interaction is mainly mediated via histones H2A and H2B and inactivates the nucleotidyltransferase activity by blocking DNA-binding and subsequent activation. Interacts with PQBP1 (via WW domain). Interacts with TRIM14; this interaction recruits USP14, leading to deubiquitinate and stabilize CGAS and promote type I interferon production. Interacts with ZCCHC3; promoting sensing of dsDNA by CGAS. Interacts (when not monomethylated) with (poly-ADP-ribosylated) PARP1; interaction takes place in the nucleus and prevents the formation of the PARP1-TIMELESS complex. Interacts (when monomethylated) with SGF29; interaction with SGF29 prevents interaction with PARP1. Interacts with PCBP2; preventing the formation of liquid-like droplets in which CGAS is activated. Interacts with IRGM; promoting CGAS degradation. Interacts with DDX41. As to quaternary structure, (Microbial infection) Interacts with herpes virus 8/HHV-8 protein ORF52; this interaction inhibits cGAS enzymatic activity by preventing the formation of liquid-like droplets by CGAS. (Microbial infection) Interacts with herpes simplex virus 1 protein UL37; this interaction deaminates CGAS and inhibits its activation. In terms of assembly, (Microbial infection) Interacts with vaccinia virus protein OPG067; this interaction promotes CGAS proteasomal degradation. As to quaternary structure, (Microbial infection) Interacts with cytomegalovirus protein UL31; this interaction promotes dissociation of DNA from CGAS, thereby inhibiting the enzymatic activity of CGAS. (Microbial infection) Interacts with herpes simplex virus 1 tegument protein VP22 (UL49); this interaction inhibits cGAS enzymatic activity by preventing the formation of liquid-like droplets by CGAS. In terms of assembly, (Microbial infection) Interacts with herpesvirus 3 tegument protein VP22 (ORF9); this interaction inhibits cGAS enzymatic activity by preventing the formation of liquid-like droplets by CGAS. As to quaternary structure, (Microbial infection) Interacts with human cytomegalovirus proteins UL42 and UL83; these interactions result in the inhibition of cGAS-STING signaling. The cofactor is Mg(2+). Mn(2+) serves as cofactor. Zn(2+) is required as a cofactor. Post-translationally, the N-terminal disordered part (1-160) is phosphorylated by AURKB during the G2-M transition, blocking CGAS liquid phase separation and preventing activation. Phosphorylation at Tyr-215 by BLK promotes cytosolic retention. Localizes into the nucleus following dephosphorylation at Tyr-215. Phosphorylation at Ser-435 activates the nucleotidyltransferase activity. Dephosphorylation at Ser-435 by PPP6C impairs its ability to bind GTP, thereby inactivating it. Phosphorylation at Thr-68 and Ser-213 by PRKDC inhibits its cyclic GMP-AMP synthase activity by impairing homodimerization and activation. Phosphorylation at Ser-305 by AKT (AKT1, AKT2 or AKT3) suppresses the nucleotidyltransferase activity. Phosphorylation at Ser-305 by CDK1 during mitosis leads to its inhibition, thereby preventing CGAS activation by self-DNA during mitosis. Dephosphorylated at Ser-305 by protein phosphatase PP1 upon mitotic exit. Ubiquitinated at Lys-414 via 'Lys-48'-linked polyubiquitin chains, leading to its SQSTM1-mediated autophagic degradation. Interaction with TRIM14 promotes recruitment of USP14, leading to deubiquitinate Lys-414 and stabilize CGAS. Ubiquitinated at Lys-173 and Lys-384 by RNF185 via 'Lys-27'-linked polyubiquitination, promoting CGAS cyclic GMP-AMP synthase activity. Monoubiquitination at Lys-347 by TRIM56 promotes oligomerization and subsequent activation. Monoubiquitination by TRIM41 promotes CGAS activation. Ubiquitination at Lys-285 and Lys-479 via 'Lys-48'-linked polyubiquitination promotes its degradation. Deubiquitination at Lys-285 by USP29 promotes its stabilization. Deubiquitinated by USP27X, promoting its stabilization. Ubiquitinated at Lys-411 via 'Lys-63'-linked polyubiquitin chains by MARCHF8, leading to the inhibition of its DNA binding ability. In cycling cells, nucleosome-bound CGAS is ubiquitinated at Lys-427 and Lys-428 via 'Lys-48'-linked polyubiquitin chains by the ECS(SPSB3) complex, leading to its degradation: ubiquitination and degradation of nuclear CGAS during G1 and G2 phases is required to promote low intranuclear CGAS abundance before the next mitotic cycle. In terms of processing, sumoylated at Lys-231 and Lys-479 by TRIM38 in uninfected cells and during the early phase of viral infection, promoting its stability by preventing ubiquitination at Lys-285 and Lys-479, and subsequent degradation. Desumoylated by SENP2 during the late phase of viral infection. Sumoylation at Lys-347, Lys-384 and Lys-394 prevents DNA-binding, oligomerization and nucleotidyltransferase activity. Desumoylation at Lys-347, Lys-384 and Lys-394 by SENP7 relieves inhibition and activates CGAS. Post-translationally, polyglutamylated by TTLL6 at Glu-286, leading to impair DNA-binding activity. Monoglutamylated at Glu-314 by TTLL4, leading to impair the nucleotidyltransferase activity. Deglutamylated by AGBL5/CCP5 and AGBL6/CCP6. Acetylation at Lys-384, Lys-394 and Lys-414 inhibits the cyclic GMP-AMP synthase activity. Deacetylated upon cytosolic DNA challenge such as viral infections. Acetylation can be mediated by aspirin (acetylsalicylate) drug, which directly acetylates CGAS. Acetylation by aspirin efficiently inhibits CGAS-mediated immune responses and is able to suppress self-DNA-induced autoimmunity. Acetylation at Lys-47, Lys-56, Lys-62 and Lys-83 by KAT5 increases the cyclic GMP-AMP synthase activity by promoting DNA-binding and subsequent activation. In terms of processing, proteolytically cleaved by apoptotic caspases during apoptosis, leading to its inactivation. The damage of the nucleus and the mitochondria during apoptosis leads to leakage of nuclear and mitochondrial DNA, which activate CGAS: cleavage and inactivation during apoptosis in required to prevent cytokine overproduction. Cleaved by CASP3 at Asp-319 during virus-induced apoptosis, thereby inactivating it and preventing cytokine overproduction. Cleaved by CASP1 at Asp-140 and Asp-157 upon DNA virus infection; the cleavage impairs cGAMP production. Also cleaved by the pyroptotic CASP4 and CASP5 during non-canonical inflammasome activation; they don't cut at the same sites than CASP1. Post-translationally, degraded via selective autophagy following interaction with IRGM. IRGM promotes CGAS recruitment to autophagosome membranes, promoting its SQSTM1/p62-dependent autophagic degradation. Poly-ADP-ribosylation at Asp-191 by PARP1 impairs DNA-binding, thereby preventing the cyclic GMP-AMP synthase activity. In terms of processing, palmitoylation at Cys-474 by ZDHHC18 impairs DNA-binding, thereby preventing the cyclic GMP-AMP synthase activity. Palmitoylation at Cys-404 and Cys-405 by ZDHHC9 promotes homodimerization and cyclic GMP-AMP synthase activity. Depalmitoylation at Cys-404 and Cys-405 by LYPLAL1 impairs homodimerization and cyclic GMP-AMP synthase activity. Post-translationally, monomethylated at Lys-506 by SETD7. Monomethylation promotes interaction with SGF29, preventing interaction between PARP1 nad SGF29. Demethylation by RIOX1 promotes interaction with PARP1, followed by PARP1 inactivation. Lactylation by AARS2 prevents ability to undergo liquid-liquid phase separation (LLPS), thereby inhibiting CGAS activation. In terms of processing, (Microbial infection) Deamidated on 'Asn-210' by herpes simplex virus 1 protein UL37. This modification significantly reduces CGAS-dependent cGAMP production and innate immune signaling induced by dsDNA. Post-translationally, (Microbial infection) Degraded by an autophagy-mediated mechanism in presence of Chikungunya virus capsid protein. In terms of tissue distribution, expressed in the monocytic cell line THP1.

The protein localises to the nucleus. It localises to the chromosome. The protein resides in the cell membrane. Its subcellular location is the cytoplasm. It is found in the cytosol. It catalyses the reaction GTP + ATP = 2',3'-cGAMP + 2 diphosphate. It carries out the reaction GTP + ATP = pppGp(2'-5')A + diphosphate. The catalysed reaction is pppGp(2'-5')A = 2',3'-cGAMP + diphosphate. With respect to regulation, the enzyme activity is strongly increased by double-stranded DNA (dsDNA), but not by single-stranded DNA or RNA. DNA-binding induces the formation of liquid-like droplets in which CGAS is activated. Liquid-like droplets also create a selective environment that restricts entry of negative regulators, such as TREX1 or BANF1/BAF, allowing sensing of DNA. A number of mechanisms exist to restrict its activity toward self-DNA. The nucleotidyltransferase activity is inhibited in the nucleus via its association with nucleosomes: interacts with the acidic patch of histones H2A and H2B, thereby blocking DNA-binding and subsequent activation. CGAS is also inactive when associated with mitotic chromatin. Chromatin-bound CGAS cannot be activated by exogenous DNA in mitotic cells: phosphorylation of the N-terminal disordered part by AURKB during the G2-M transition blocks CGAS liquid phase separation and activation. Activity toward self-DNA is inhibited by BANF1/BAF upon acute loss of nuclear membrane integrity: BANF1/BAF acts by outcompeting CGAS for DNA-binding, thereby preventing CGAS activation. DNA-induced activation at micronuclei is also limited by TREX1, which degrades micronuclear DNA upon nuclear envelope rupture, thereby preventing CGAS activation. CGAS can be released from nucleosomes and activated by MRE11 component of the MRN complex, which displaces CGAS from acidic-patch-mediated sequestration. Acetylation at Lys-384, Lys-394 and Lys-414 inhibits the cyclic GMP-AMP synthase activity. Inhibited by aspirin (acetylsalicylate) drug, which acetylates CGAS. Acetylation by KAT5 increases the cyclic GMP-AMP synthase activity by promoting DNA-binding and subsequent activation. Phosphorylation at Ser-305 suppresses the nucleotidyltransferase activity. Phosphorylation at Ser-435 promotes the cyclic GMP-AMP synthase activity. Phosphorylation at Thr-68 and Ser-213 inhibits its cyclic GMP-AMP synthase activity. Ubiquitination at Lys-173 and Lys-384 via 'Lys-27'-linked polyubiquitination enhances the cyclic GMP-AMP synthase activity. Monoubiquitination at Lys-347 promotes oligomerization and subsequent activation. Sumoylation at Lys-347, Lys-384 and Lys-394 prevents DNA-binding, oligomerization and nucleotidyltransferase activity. The enzyme activity is impaired by the cleavage at Asp-140 and Asp-157 produced by CASP1. In addition to DNA, also activated by collided ribosomes upon translation stress: specifically binds collided ribosomes, promoting its activation and triggering type-I interferon production. Strongly inhibited by compound PF-06928215, which is specific for human protein. Inhibited by small-molecule inhibitors with a pyridoindole tricyclic core G108, G140 and G150. (Microbial infection) Nucleotidyltransferase activity is inhibited by different herpesvirus tegument proteins (Herpes simplex virus 1 tegument protein VP22, herpes virus 8 protein ORF52 and herpesvirus 3 tegument protein VP22/ORF9). Viral tegument proteins act by disrupting liquid-like droplets in which CGAS is activated, thereby preventing CGAS activity. Functionally, nucleotidyltransferase that catalyzes the formation of cyclic GMP-AMP (2',3'-cGAMP) from ATP and GTP and plays a key role in innate immunity. Catalysis involves both the formation of a 2',5' phosphodiester linkage at the GpA step and the formation of a 3',5' phosphodiester linkage at the ApG step, producing c[G(2',5')pA(3',5')p]. Acts as a key DNA sensor: directly binds double-stranded DNA (dsDNA), inducing the formation of liquid-like droplets in which CGAS is activated, leading to synthesis of 2',3'-cGAMP, a second messenger that binds to and activates STING1, thereby triggering type-I interferon production. Preferentially recognizes and binds curved long dsDNAs of a minimal length of 40 bp. Acts as a key foreign DNA sensor, the presence of double-stranded DNA (dsDNA) in the cytoplasm being a danger signal that triggers the immune responses. Has antiviral activity by sensing the presence of dsDNA from DNA viruses in the cytoplasm. Also acts as an innate immune sensor of infection by retroviruses, such as HIV-2, by detecting the presence of reverse-transcribed DNA in the cytosol. In contrast, HIV-1 is poorly sensed by CGAS, due to its capsid that cloaks viral DNA from CGAS detection. Detection of retroviral reverse-transcribed DNA in the cytosol may be indirect and be mediated via interaction with PQBP1, which directly binds reverse-transcribed retroviral DNA. Also detects the presence of DNA from bacteria, such as M.tuberculosis. 2',3'-cGAMP can be transferred from producing cells to neighboring cells through gap junctions, leading to promote STING1 activation and convey immune response to connecting cells. 2',3'-cGAMP can also be transferred between cells by virtue of packaging within viral particles contributing to IFN-induction in newly infected cells in a cGAS-independent but STING1-dependent manner. Also senses the presence of neutrophil extracellular traps (NETs) that are translocated to the cytosol following phagocytosis, leading to synthesis of 2',3'-cGAMP. In addition to foreign DNA, can also be activated by endogenous nuclear or mitochondrial DNA. When self-DNA leaks into the cytosol during cellular stress (such as mitochondrial stress, SARS-CoV-2 infection causing severe COVID-19 disease, DNA damage, mitotic arrest or senescence), or is present in form of cytosolic micronuclei, CGAS is activated leading to a state of sterile inflammation. Acts as a regulator of cellular senescence by binding to cytosolic chromatin fragments that are present in senescent cells, leading to trigger type-I interferon production via STING1 and promote cellular senescence. Also involved in the inflammatory response to genome instability and double-stranded DNA breaks: acts by localizing to micronuclei arising from genome instability. Micronuclei, which are frequently found in cancer cells, consist of chromatin surrounded by their own nuclear membrane: following breakdown of the micronuclear envelope, a process associated with chromothripsis, CGAS binds self-DNA exposed to the cytosol, leading to 2',3'-cGAMP synthesis and subsequent activation of STING1 and type-I interferon production. Activated in response to prolonged mitotic arrest, promoting mitotic cell death. In a healthy cell, CGAS is however kept inactive even in cellular events that directly expose it to self-DNA, such as mitosis, when cGAS associates with chromatin directly after nuclear envelope breakdown or remains in the form of postmitotic persistent nuclear cGAS pools bound to chromatin. Nuclear CGAS is inactivated by chromatin via direct interaction with nucleosomes, which block CGAS from DNA binding and thus prevent CGAS-induced autoimmunity. Also acts as a suppressor of DNA repair in response to DNA damage: inhibits homologous recombination repair by interacting with PARP1, the CGAS-PARP1 interaction leading to impede the formation of the PARP1-TIMELESS complex. In addition to DNA, also sense translation stress: in response to translation stress, translocates to the cytosol and associates with collided ribosomes, promoting its activation and triggering type-I interferon production. In contrast to other mammals, human CGAS displays species-specific mechanisms of DNA recognition and produces less 2',3'-cGAMP, allowing a more fine-tuned response to pathogens. The sequence is that of Cyclic GMP-AMP synthase from Homo sapiens (Human).